The chain runs to 492 residues: Propanoyl-CoA:succinate CoA transferase (492 aa).

Gly260–Ile264 serves as a coordination point for CoA. The 5-glutamyl coenzyme A thioester intermediate role is filled by Glu286. 2 residues coordinate CoA: Asn376 and Gly380.

Belongs to the acetyl-CoA hydrolase/transferase family.

It carries out the reaction propanoyl-CoA + succinate = propanoate + succinyl-CoA. Catalyzes the transfer of coenzyme A from propionyl-CoA to succinate. Could be part of a pathway that converts succinate to propionate. The chain is Propanoyl-CoA:succinate CoA transferase from Escherichia coli (strain K12).